An 81-amino-acid chain; its full sequence is Cytotoxin 2 (81 aa).

The N-terminal stretch at 1 to 21 is a signal peptide; that stretch reads MKTLLLTLVVVTIVCLDLGYT. 4 disulfide bridges follow: Cys-24–Cys-42, Cys-35–Cys-59, Cys-63–Cys-74, and Cys-75–Cys-80.

Belongs to the three-finger toxin family. Short-chain subfamily. Type IA cytotoxin sub-subfamily. Monomer in solution; Homodimer and oligomer in the presence of negatively charged lipids forming a pore with a size ranging between 20 and 30 Angstroms. Expressed by the venom gland.

It is found in the secreted. The protein resides in the target cell membrane. Functionally, shows cytolytic activity on many different cells by forming pore in lipid membranes. In vivo, increases heart rate or kills the animal by cardiac arrest. In addition, it binds to heparin with high affinity, interacts with Kv channel-interacting protein 1 (KCNIP1) in a calcium-independent manner, and binds to integrin alpha-V/beta-3 (ITGAV/ITGB3) with moderate affinity. In Naja kaouthia (Monocled cobra), this protein is Cytotoxin 2.